A 303-amino-acid chain; its full sequence is DnaJ homolog subfamily C member 17 (303 aa).

A J domain is found at 11-76; sequence DLYALLGIEE…AARAAYDKVR (66 aa). 2 disordered regions span residues 104–123 and 150–170; these read ERQA…SATT and IRQD…GKGT. S112 is subject to Phosphoserine. The segment covering 150–166 has biased composition (basic and acidic residues); it reads IRQDREQRLRGRTENTE. In terms of domain architecture, RRM spans 178–249; that stretch reads KCKKEDESQG…NPLKVSWLEG (72 aa). An N6-methyllysine modification is found at K264.

As to expression, expressed in the thyroid gland.

The protein localises to the cytoplasm. Its subcellular location is the nucleus. In terms of biological role, may negatively affect PAX8-induced thyroglobulin/TG transcription. The polypeptide is DnaJ homolog subfamily C member 17 (Dnajc17) (Mus musculus (Mouse)).